Here is a 389-residue protein sequence, read N- to C-terminus: E3 ubiquitin-protein ligase E3D (389 aa).

Position 2 is an N-acetylalanine (A2). The short motif at 129–159 (PLPGDNWGALVDEWCCHPDPFANKPLHPREN) is the BRAT1-like motif element. C144 serves as a coordination point for Zn(2+). Residues 235–257 (LPSERNFPIIPRSQFVQSVLAQC) form an interaction with UBE2C region. Positions 353 to 389 (LPSTTCLELLLILSKSNATLPPSLRCMNSFQVAFLKM) are HECT-like.

As to quaternary structure, interacts with UBE2C/UbcH10 (E2 ubiquitin-conjugating enzyme). In vitro, interacts with cyclin-B. Post-translationally, ubiquitinated by UBCH10 (E2 ubiquitin-conjugating enzyme).

Its subcellular location is the cytoplasm. It carries out the reaction S-ubiquitinyl-[E2 ubiquitin-conjugating enzyme]-L-cysteine + [acceptor protein]-L-lysine = [E2 ubiquitin-conjugating enzyme]-L-cysteine + N(6)-ubiquitinyl-[acceptor protein]-L-lysine.. It functions in the pathway protein modification; protein ubiquitination. E3 ubiquitin-protein ligase which accepts ubiquitin from specific E2 ubiquitin-conjugating enzymes, and transfers it to substrates, generally promoting their degradation by the proteasome. Independently of its E3 ubiquitin-protein ligase activity, acts as an inhibitor of CPSF3 endonuclease activity by blocking CPSF3 active site. The polypeptide is E3 ubiquitin-protein ligase E3D (UBE3D) (Bos taurus (Bovine)).